Consider the following 98-residue polypeptide: NADH-ubiquinone oxidoreductase chain 4L (98 aa).

The next 3 helical transmembrane spans lie at 1-21, 29-49, and 61-81; these read MPVV…GLLV, SLLC…VTVL, and IILL…LVMV.

Belongs to the complex I subunit 4L family. Core subunit of respiratory chain NADH dehydrogenase (Complex I) which is composed of 45 different subunits.

Its subcellular location is the mitochondrion inner membrane. It carries out the reaction a ubiquinone + NADH + 5 H(+)(in) = a ubiquinol + NAD(+) + 4 H(+)(out). Its function is as follows. Core subunit of the mitochondrial membrane respiratory chain NADH dehydrogenase (Complex I) which catalyzes electron transfer from NADH through the respiratory chain, using ubiquinone as an electron acceptor. Part of the enzyme membrane arm which is embedded in the lipid bilayer and involved in proton translocation. The sequence is that of NADH-ubiquinone oxidoreductase chain 4L (MT-ND4L) from Ursus arctos (Brown bear).